Consider the following 184-residue polypeptide: Ribosome-recycling factor (184 aa).

This sequence belongs to the RRF family.

It is found in the cytoplasm. In terms of biological role, responsible for the release of ribosomes from messenger RNA at the termination of protein biosynthesis. May increase the efficiency of translation by recycling ribosomes from one round of translation to another. This is Ribosome-recycling factor from Borrelia recurrentis (strain A1).